Reading from the N-terminus, the 198-residue chain is Peroxiredoxin-2 (198 aa).

Ala2 is subject to N-acetylalanine. The Thioredoxin domain occupies 6–164; the sequence is AHIGKPAPDF…ALRLVQAFQY (159 aa). Residue Cys51 is the Cysteine sulfenic acid (-SOH) intermediate of the active site. Ser112 carries the post-translational modification Phosphoserine. Phosphothreonine is present on Thr182. Lys196 is modified (N6-acetyllysine).

The protein belongs to the peroxiredoxin family. AhpC/Prx1 subfamily. As to quaternary structure, homodimer; disulfide-linked, upon oxidation. 5 homodimers assemble to form a ring-like decamer. Interacts with TIPIN. In terms of processing, the enzyme can be inactivated by further oxidation of the cysteine sulfenic acid (C(P)-SOH) to sulphinic acid (C(P)-SO2H) instead of its condensation to a disulfide bond. It can be reactivated by forming a transient disulfide bond with sulfiredoxin SRXN1, which reduces the cysteine sulfinic acid in an ATP- and Mg-dependent manner. Post-translationally, acetylation increases resistance to transition to high molecular-mass complexes. Deacetylated by HDAC6 which decreases reducing activity.

It localises to the cytoplasm. It catalyses the reaction a hydroperoxide + [thioredoxin]-dithiol = an alcohol + [thioredoxin]-disulfide + H2O. Thiol-specific peroxidase that catalyzes the reduction of hydrogen peroxide and organic hydroperoxides to water and alcohols, respectively. Plays a role in cell protection against oxidative stress by detoxifying peroxides and as sensor of hydrogen peroxide-mediated signaling events. Might participate in the signaling cascades of growth factors and tumor necrosis factor-alpha by regulating the intracellular concentrations of H(2)O(2). This Rattus norvegicus (Rat) protein is Peroxiredoxin-2 (Prdx2).